A 487-amino-acid polypeptide reads, in one-letter code: Aspartyl/glutamyl-tRNA(Asn/Gln) amidotransferase subunit B (487 aa).

It belongs to the GatB/GatE family. GatB subfamily. As to quaternary structure, heterotrimer of A, B and C subunits.

The catalysed reaction is L-glutamyl-tRNA(Gln) + L-glutamine + ATP + H2O = L-glutaminyl-tRNA(Gln) + L-glutamate + ADP + phosphate + H(+). The enzyme catalyses L-aspartyl-tRNA(Asn) + L-glutamine + ATP + H2O = L-asparaginyl-tRNA(Asn) + L-glutamate + ADP + phosphate + 2 H(+). Allows the formation of correctly charged Asn-tRNA(Asn) or Gln-tRNA(Gln) through the transamidation of misacylated Asp-tRNA(Asn) or Glu-tRNA(Gln) in organisms which lack either or both of asparaginyl-tRNA or glutaminyl-tRNA synthetases. The reaction takes place in the presence of glutamine and ATP through an activated phospho-Asp-tRNA(Asn) or phospho-Glu-tRNA(Gln). In Roseiflexus sp. (strain RS-1), this protein is Aspartyl/glutamyl-tRNA(Asn/Gln) amidotransferase subunit B.